We begin with the raw amino-acid sequence, 213 residues long: Nicotinamidase (213 aa).

Catalysis depends on Asp-10, which acts as the Proton acceptor. Zn(2+) contacts are provided by Asp-52, His-54, and His-86. Residue Lys-111 is part of the active site. Cys-156 (nucleophile) is an active-site residue.

Belongs to the isochorismatase family.

The enzyme catalyses nicotinamide + H2O = nicotinate + NH4(+). The catalysed reaction is pyrazinamide + H2O = pyrazine-2-carboxylate + NH4(+). The protein operates within cofactor biosynthesis; nicotinate biosynthesis; nicotinate from nicotinamide: step 1/1. Its function is as follows. Catalyzes the deamidation of nicotinamide (NAM) into nicotinate. Likely functions in the cyclical salvage pathway for production of NAD from nicotinamide. Functionally, is also able to hydrolyze the first-line antituberculous drug pyrazinamide (PZA) into pyrazinoic acid in vitro, but this reaction is not considered to be physiologically relevant. The polypeptide is Nicotinamidase (Escherichia coli (strain K12)).